The sequence spans 208 residues: Large ribosomal subunit protein uL3 (208 aa).

Residues 122 to 148 form a disordered region; it reads KRHGQSRGPMAHGSRYHRRPGSMGPVA.

The protein belongs to the universal ribosomal protein uL3 family. As to quaternary structure, part of the 50S ribosomal subunit. Forms a cluster with proteins L14 and L19.

Functionally, one of the primary rRNA binding proteins, it binds directly near the 3'-end of the 23S rRNA, where it nucleates assembly of the 50S subunit. The protein is Large ribosomal subunit protein uL3 of Streptococcus pyogenes serotype M1.